Consider the following 717-residue polypeptide: Protein Teyrha-meyrha (717 aa).

Residues 140 to 152 (FRTDSASPTCTSH) are compositionally biased toward polar residues. Disordered stretches follow at residues 140–214 (FRTD…SNPA), 229–270 (HLAA…APPV), 440–498 (KIPP…QPGK), 511–539 (SQKD…GEAP), 563–594 (DSCG…MDTA), and 624–717 (QRRQ…DTKA). The segment covering 195 to 214 (ATSSSASSSSSSSCSTSNPA) has biased composition (low complexity). Basic residues predominate over residues 235-263 (PHHHPHTHAHSHPHPLAHPHAHSHHHVGH). Positions 442-451 (PPEDDAKSQE) are enriched in basic and acidic residues. A compositionally biased stretch (acidic residues) spans 452–466 (EIETVDVESCNDEVP). The segment covering 471–482 (ELATPSSGSSGT) has biased composition (polar residues). Positions 513–522 (KDPHPDEHDV) are enriched in basic and acidic residues. Low complexity-rich tracts occupy residues 523 to 533 (STNVTTASSSS) and 570 to 580 (NDTNSSSSTHN). Residues 630–640 (QNVGSSRSLEN) are compositionally biased toward polar residues. The span at 667 to 686 (NNNNNNNNNNNNSNSNNNNN) shows a compositional bias: low complexity. Over residues 687–704 (PSTKYAESMENSLSQLSS) the composition is skewed to polar residues.

In terms of tissue distribution, in embryos, expressed specifically in M12 (at protein level).

The protein resides in the nucleus. Functionally, required for the correct synaptic targeting of motoneurons RP5 and V to muscle 12 (M12). May be involved in the negative regulation of Tl in M12. Involved in the correct patterning of veins in the proximal (costal) region of the wing blade. This chain is Protein Teyrha-meyrha, found in Drosophila melanogaster (Fruit fly).